A 193-amino-acid polypeptide reads, in one-letter code: Putative deoxynucleotide monophosphate kinase (193 aa).

K10 serves as a coordination point for dGMP. ATP-binding residues include G13 and T16. DGMP is bound by residues L36, K37, K58, D122, R124, E128, and S155.

This sequence belongs to the dNMP kinase family.

The enzyme catalyses a 2'-deoxyribonucleoside 5'-phosphate + ATP = a 2'-deoxyribonucleoside 5'-diphosphate + ADP. In Acanthamoeba polyphaga mimivirus (APMV), this protein is Putative deoxynucleotide monophosphate kinase.